A 342-amino-acid chain; its full sequence is SWR1-complex protein 5 (342 aa).

3 disordered regions span residues 1-126 (MAPT…PVTI), 142-178 (PRTSTAKPDESADPANCDIAKSSSQQPETAKAKDPDS), and 214-238 (LGENAPADGETAAEDESSSAKRMPR). Composition is skewed to acidic residues over residues 8–20 (LAEDYASEEDSDF) and 33–43 (ISDDDDEEAGE). The span at 78-87 (GEKRQKKTKT) shows a compositional bias: basic residues. Positions 260 to 341 (NLSMASRLQA…RRARMAQAGK (82 aa)) constitute a BCNT-C domain.

This sequence belongs to the SWC5 family. As to quaternary structure, component of the SWR1 chromatin remodeling complex.

The protein localises to the nucleus. Functionally, component of the SWR1 complex which mediates the ATP-dependent exchange of histone H2A for the H2A variant H2A.Z leading to transcriptional regulation of selected genes by chromatin remodeling. Involved in chromosome stability. This chain is SWR1-complex protein 5 (crc-2), found in Neurospora crassa (strain ATCC 24698 / 74-OR23-1A / CBS 708.71 / DSM 1257 / FGSC 987).